A 354-amino-acid polypeptide reads, in one-letter code: Isocitrate dehydrogenase [NAD] regulatory subunit A, mitochondrial (354 aa).

Substrate contacts are provided by S95, N97, R101, R111, and R132. Mg(2+)-binding residues include D219, D243, and D247. NADP(+)-binding positions include 276–282 (HGTAPDI) and N289.

The protein belongs to the isocitrate and isopropylmalate dehydrogenases family. In terms of assembly, heterooligomer of catalytic and regulatory subunits. Mg(2+) serves as cofactor. It depends on Mn(2+) as a cofactor.

It localises to the mitochondrion. It catalyses the reaction D-threo-isocitrate + NAD(+) = 2-oxoglutarate + CO2 + NADH. Its function is as follows. Performs an essential role in the oxidative function of the citric acid cycle. In Dictyostelium discoideum (Social amoeba), this protein is Isocitrate dehydrogenase [NAD] regulatory subunit A, mitochondrial (idhA).